Consider the following 240-residue polypeptide: Ubiquinone biosynthesis O-methyltransferase (240 aa).

Residues Arg-44, Gly-64, Asp-85, and Met-129 each contribute to the S-adenosyl-L-methionine site.

The protein belongs to the methyltransferase superfamily. UbiG/COQ3 family.

It carries out the reaction a 3-demethylubiquinol + S-adenosyl-L-methionine = a ubiquinol + S-adenosyl-L-homocysteine + H(+). It catalyses the reaction a 3-(all-trans-polyprenyl)benzene-1,2-diol + S-adenosyl-L-methionine = a 2-methoxy-6-(all-trans-polyprenyl)phenol + S-adenosyl-L-homocysteine + H(+). Its pathway is cofactor biosynthesis; ubiquinone biosynthesis. Functionally, O-methyltransferase that catalyzes the 2 O-methylation steps in the ubiquinone biosynthetic pathway. In Escherichia coli O8 (strain IAI1), this protein is Ubiquinone biosynthesis O-methyltransferase.